A 348-amino-acid chain; its full sequence is Neutral peroxidase (348 aa).

Positions 1-20 (MASFVARLTLALSFIALALA) are cleaved as a signal peptide. A propeptide spanning residues 21 to 67 (GYSLVQNTLSSPTHTRLNLIPTWLDSTFDSADVLSYLGFGKSSGRLS) is cleaved from the precursor. 4 disulfides stabilise this stretch: Cys-71-Cys-149, Cys-102-Cys-107, Cys-156-Cys-344, and Cys-235-Cys-256. The active-site Proton acceptor is His-100. Ca(2+)-binding residues include Asp-101, Val-104, Gly-106, and Asp-108. 5 N-linked (GlcNAc...) asparagine glycosylation sites follow: Asn-114, Asn-118, Asn-173, Asn-177, and Asn-189. Pro-198 lines the substrate pocket. Asn-203 carries N-linked (GlcNAc...) asparagine glycosylation. Heme b is bound at residue His-228. Residue Thr-229 participates in Ca(2+) binding. 2 N-linked (GlcNAc...) asparagine glycosylation sites follow: Asn-247 and Asn-261. Ca(2+)-binding residues include Asp-269, Ser-271, and Asp-276. Asn-300 is a glycosylation site (N-linked (GlcNAc...) asparagine).

Belongs to the peroxidase family. Classical plant (class III) peroxidase subfamily. The cofactor is Ca(2+). Heme b serves as cofactor. In terms of tissue distribution, highly expressed in suspension cultured cells. Weak expression also found in the stems of intact plants. No expression in leaf, tuberous root and non-tuberous root.

The protein resides in the secreted. It catalyses the reaction 2 a phenolic donor + H2O2 = 2 a phenolic radical donor + 2 H2O. Removal of H(2)O(2), oxidation of toxic reductants, biosynthesis and degradation of lignin, suberization, auxin catabolism, response to environmental stresses such as wounding, pathogen attack and oxidative stress. These functions might be dependent on each isozyme/isoform in each plant tissue. Its function is as follows. May contribute to protection against cold-induced oxidative stress. The chain is Neutral peroxidase from Ipomoea batatas (Sweet potato).